A 1187-amino-acid polypeptide reads, in one-letter code: Metabotropic glutamate receptor-like protein Q (1187 aa).

At 1–735 the chain is on the extracellular side; sequence MRLFFKFFYL…TIETSNIAKT (735 aa). N-linked (GlcNAc...) asparagine glycosylation is found at Asn35, Asn44, Asn55, Asn177, Asn258, Asn275, Asn397, Asn402, Asn462, Asn526, Asn527, Asn557, Asn562, and Asn684. The helical transmembrane segment at 736-756 threads the bilayer; the sequence is VMIITTSILVLLILLCFGITI. The Cytoplasmic segment spans residues 757 to 768; sequence AYSKEKVINFGN. A helical membrane pass occupies residues 769–789; sequence IVFLILMLFSCLFLCIIIYVS. At 790-796 the chain is on the extracellular side; the sequence is IEPTNFS. N-linked (GlcNAc...) asparagine glycosylation is present at Asn794. Residues 797-817 form a helical membrane-spanning segment; sequence CQFSAIVFPIGIGILFTLTLL. Over 818–843 the chain is Cytoplasmic; sequence KQYKIYKLFKYSDFLKINTDNLKMVK. The helical transmembrane segment at 844-864 threads the bilayer; the sequence is YAGLIMVPVFLLVLIGVIVYP. Topologically, residues 865–888 are extracellular; the sequence is SKPTFILDLHTKTATKYCISRKYY. The chain crosses the membrane as a helical span at residues 889-909; that stretch reads VFSIVIVVYEVIILLTSCFIA. The Cytoplasmic portion of the chain corresponds to 910–925; the sequence is MKSKRYHSTPGTFYES. The helical transmembrane segment at 926–946 threads the bilayer; sequence LFNSILIYNYTLVFIVLIPLF. At 947 to 955 the chain is on the extracellular side; it reads YTLQNNPTT. Residues 956 to 976 form a helical membrane-spanning segment; the sequence is IYLIYSIGSSILVFATLSIIF. Residues 977–1095 are Cytoplasmic-facing; it reads IPKINFLFRR…SPSSQSIDFL (119 aa). Residues 1074 to 1105 show a composition bias toward polar residues; that stretch reads IYPNQIPKQTTNSPSSQSIDFLNNPTIPKNKS. Positions 1074–1187 are disordered; it reads IYPNQIPKQT…RKSMDPSLDS (114 aa). Basic residues predominate over residues 1114-1124; the sequence is KKPKKKLKSKI. Positions 1125–1174 are enriched in low complexity; that stretch reads ISKSANSSPNINNNTINNNNNNNNNNNNNNNNNNNNNNINNNNNNNININ.

This sequence belongs to the G-protein coupled receptor 3 family. GABA-B receptor subfamily.

It is found in the membrane. The chain is Metabotropic glutamate receptor-like protein Q (grlQ) from Dictyostelium discoideum (Social amoeba).